The following is a 729-amino-acid chain: Triadin (729 aa).

The segment at 1 to 28 (MTEITAEGNASTTTTVIDSKNGSVPKSP) is disordered. Over 1–47 (MTEITAEGNASTTTTVIDSKNGSVPKSPGKVLKRTVTEDIVTTFSSP) the chain is Cytoplasmic. The span at 8 to 24 (GNASTTTTVIDSKNGSV) shows a compositional bias: polar residues. The chain crosses the membrane as a helical span at residues 48–68 (AAWLLVIALIITWSAVAIVMF). Over 69 to 729 (DLVDYKNFSA…NSPGQKQQGQ (661 aa)) the chain is Lumenal. N-linked (GlcNAc...) asparagine glycosylation occurs at Asn-75. The segment covering 117–129 (EDEEDDDGDEDTD) has biased composition (acidic residues). Disordered regions lie at residues 117 to 265 (EDEE…EQKD), 281 to 682 (DLKP…PTKQ), and 705 to 729 (PFTPADRPGESSGQANSPGQKQQGQ). 8 stretches are compositionally biased toward basic and acidic residues: residues 130–265 (KGEI…EQKD), 309–357 (LEEK…KASE), 371–433 (AKKD…KEEI), 444–509 (GKKE…EVKP), 516–531 (GKKEEKPEPQIKKEAK), 538–562 (VQIHKQDIVKPEKTVSHGKPEEKVL), 580–598 (KKAEHREREPPSIKTDKPK), and 609–674 (ESGK…KEGT). Asn-647 carries an N-linked (GlcNAc...) asparagine glycan. A compositionally biased stretch (polar residues) spans 715–729 (SSGQANSPGQKQQGQ).

As to quaternary structure, homooligomer of variable subunit number; disulfide-linked. Interacts with CASQ1 and RYR1 in skeletal muscle. Interacts with CASQ2. Phosphorylated by CaMK2. In terms of processing, N-glycosylated.

It is found in the cell membrane. The protein localises to the sarcoplasmic reticulum membrane. Functionally, contributes to the regulation of lumenal Ca2+ release via the sarcoplasmic reticulum calcium release channels RYR1 and RYR2, a key step in triggering skeletal and heart muscle contraction. Required for normal organization of the triad junction, where T-tubules and the sarcoplasmic reticulum terminal cisternae are in close contact. Required for normal skeletal muscle strength. Plays a role in excitation-contraction coupling in the heart and in regulating the rate of heart beats. The chain is Triadin (TRDN) from Homo sapiens (Human).